We begin with the raw amino-acid sequence, 108 residues long: Nucleoid-associated protein Bmul_1447/BMULJ_01796 (108 aa).

The segment at 84–108 (EATSQEKMSGMTSGLPLPPGFKLPF) is disordered. A compositionally biased stretch (polar residues) spans 85–95 (ATSQEKMSGMT). Positions 99 to 108 (PLPPGFKLPF) are enriched in pro residues.

Belongs to the YbaB/EbfC family. In terms of assembly, homodimer.

It localises to the cytoplasm. The protein localises to the nucleoid. In terms of biological role, binds to DNA and alters its conformation. May be involved in regulation of gene expression, nucleoid organization and DNA protection. The protein is Nucleoid-associated protein Bmul_1447/BMULJ_01796 of Burkholderia multivorans (strain ATCC 17616 / 249).